An 89-amino-acid polypeptide reads, in one-letter code: Defensin-like protein 78 (89 aa).

Positions 1–30 (MANNMVASPYKNTFMMIALVLILLISGSEA) are cleaved as a signal peptide. Cystine bridges form between Cys-40/Cys-75, Cys-44/Cys-67, Cys-52/Cys-73, and Cys-56/Cys-74.

This sequence belongs to the DEFL family.

It localises to the secreted. The polypeptide is Defensin-like protein 78 (Arabidopsis thaliana (Mouse-ear cress)).